Consider the following 391-residue polypeptide: O-methyltransferase ATR12 (391 aa).

Residues 233–234 (GG), Asp-259, and 279–280 (DF) each bind S-adenosyl-L-methionine. His-299 (proton acceptor) is an active-site residue.

This sequence belongs to the class I-like SAM-binding methyltransferase superfamily. Cation-independent O-methyltransferase family. COMT subfamily.

It functions in the pathway mycotoxin biosynthesis. Its function is as follows. O-methyltransferase; part of the core atranone cluster (CAC) which products are predicted to catalyze most or all steps of mycotoxin atranone synthesis, starting from geranylgeranyl pyrophosphate (GGPP). The initial cyclization of GGPP to dolabellane is probably performed by the terpene cyclase ATR13. The Baeyer-Villiger oxidation near the end of the atranone synthesis, which converts atranones D and E to atranones F and G is predicted to be catalyzed by the monooxygenase ATR8. Of the CAC's other predicted gene products, the reducing PKS ATR6 might synthesize a polyketide chain. This polyketide is probably transferred onto the atranone backbone by the polyketide transferase ATR5. Other predicted CAC products include 4 oxygenases (ATR2, ATR3, ATR4, and ATR14), 3 short-chain reductases (ATR7, ATR9, and ATR10), and a methyltransferase (ATR12). These may all be involved in the various steps of atranone biosynthesis, although their specific roles must await experimental determination. This chain is O-methyltransferase ATR12, found in Stachybotrys chlorohalonatus (strain IBT 40285).